The following is a 516-amino-acid chain: uncharacterized protein (516 aa).

An N-terminal signal peptide occupies residues 1-17; the sequence is MSVWVALALLGMCVSCT. Disordered regions lie at residues 29–197 and 296–426; these read KEPP…EVPR and RTVS…RDHL. Over residues 71-85 the composition is skewed to basic and acidic residues; it reads RVPESSQEREQKPES. Over residues 122 to 144 the composition is skewed to pro residues; that stretch reads VAPPAPPAPTAPRPHRPSPPPVS. The span at 145–155 shows a compositional bias: low complexity; it reads PSASKPKQRAV. Basic and acidic residues predominate over residues 351-367; sequence KAQHGTPRPDEKKDREP. Residues 394–406 are compositionally biased toward low complexity; the sequence is SPASQPSAPSAAP. Positions 415–426 are enriched in basic and acidic residues; sequence AHKEGQEKRDHL.

This is an uncharacterized protein from Treponema pallidum (strain Nichols).